Consider the following 366-residue polypeptide: Transcription initiation factor IIA subunit 1 (366 aa).

Disordered regions lie at residues 56–82, 133–162, and 257–317; these read LSPD…AANA, EVNS…SSGQ, and QLDG…DSAE. Positions 146–162 are enriched in low complexity; the sequence is SAASMMQKQQQAASSGQ. The segment covering 264–317 has biased composition (acidic residues); it reads SSDEDESEESDDNIDNDDDDDLDKDDDEDAEHEDAAEEEPLNSEDDVTDEDSAE. A phosphoserine; by TAF1 mark is found at Ser265 and Ser306.

Belongs to the TFIIA subunit 1 family. Belongs to the TFIID complex which is composed of TATA binding protein (Tbp) and a number of TBP-associated factors (Tafs). TFIIA is a heterodimer of a unprocessed large subunit 1 and a small subunit gamma. It was originally believed to be a heterotrimer of an alpha (p30), a beta (p20) and a gamma subunit (p14). Interacts with Tbp. Taf4 interacts with TFIIA-L when TFIIA-L is in complex with Tbp. The precursor form (48 kDa) is cleaved to give rise to the alpha (30 kDa) and beta (20 kDa) subunits.

The protein localises to the nucleus. In terms of biological role, TFIIA is a component of the transcription machinery of RNA polymerase II and plays an important role in transcriptional activation. TFIIA in a complex with TBP mediates transcriptional activity. This chain is Transcription initiation factor IIA subunit 1 (TfIIA-L), found in Drosophila melanogaster (Fruit fly).